The chain runs to 119 residues: Holo-[acyl-carrier-protein] synthase (119 aa).

Residues Asp8 and Glu58 each coordinate Mg(2+).

It belongs to the P-Pant transferase superfamily. AcpS family. It depends on Mg(2+) as a cofactor.

Its subcellular location is the cytoplasm. The catalysed reaction is apo-[ACP] + CoA = holo-[ACP] + adenosine 3',5'-bisphosphate + H(+). Transfers the 4'-phosphopantetheine moiety from coenzyme A to a Ser of acyl-carrier-protein. This chain is Holo-[acyl-carrier-protein] synthase, found in Halalkalibacterium halodurans (strain ATCC BAA-125 / DSM 18197 / FERM 7344 / JCM 9153 / C-125) (Bacillus halodurans).